Here is a 258-residue protein sequence, read N- to C-terminus: MKIAILYREEREKEGKFLKEKISKEHEVIEFGEANAPGRVTADLIVVVGGDGTVLKAAKKAADGTPMVGFKAGRLGFLTSYTLDEIDRFLEDLRNWNFREETRWFIQIESELGNHLALNDVTLERDLSGKMVEIEVEVEHHSSMWFFADGVVISTPTGSTAYSLSIGGPIIFPECEVLEISPIAPQFFLTRSVVIPSNFKVVVESQRDINMLVDGVLTGKTKRIEVKKSRRYVRILRPPEYDYVTVIRDKLGYGRRIE.

The active-site Proton acceptor is D51. Residues 51–52 (DG), K56, 119–120 (ND), K130, D149, 160–165 (TAYSLS), and A184 each bind NAD(+).

It belongs to the NAD kinase family. It depends on a divalent metal cation as a cofactor.

Its subcellular location is the cytoplasm. The enzyme catalyses NAD(+) + ATP = ADP + NADP(+) + H(+). In terms of biological role, involved in the regulation of the intracellular balance of NAD and NADP, and is a key enzyme in the biosynthesis of NADP. Catalyzes specifically the phosphorylation on 2'-hydroxyl of the adenosine moiety of NAD to yield NADP. This is NAD kinase from Thermotoga petrophila (strain ATCC BAA-488 / DSM 13995 / JCM 10881 / RKU-1).